A 152-amino-acid polypeptide reads, in one-letter code: Large ribosomal subunit protein uL13 (152 aa).

The segment at 133–152 (EHPHQAQKPQPLTINTIPGA) is disordered. Positions 139-152 (QKPQPLTINTIPGA) are enriched in polar residues.

It belongs to the universal ribosomal protein uL13 family. Part of the 50S ribosomal subunit.

Functionally, this protein is one of the early assembly proteins of the 50S ribosomal subunit, although it is not seen to bind rRNA by itself. It is important during the early stages of 50S assembly. This chain is Large ribosomal subunit protein uL13, found in Thermosynechococcus vestitus (strain NIES-2133 / IAM M-273 / BP-1).